We begin with the raw amino-acid sequence, 802 residues long: Fibroblast growth factor receptor 4 (802 aa).

Residues 1 to 21 (MRLLLALLGVLLSVPGPPVLS) form the signal peptide. An Ig-like C2-type 1 domain is found at 22-118 (LEASEEVELE…VLQNLTLITG (97 aa)). The Extracellular segment spans residues 22 to 369 (LEASEEVELE…AAAPEARYTD (348 aa)). Cysteine 57 and cysteine 101 are oxidised to a cystine. Asparagine 112 is a glycosylation site (N-linked (GlcNAc...) asparagine). Residues 119-148 (DSLTSSNDDEDPKSHRDPSNRHSYPQQAPY) are disordered. 2 Ig-like C2-type domains span residues 152-240 (PQRM…YLLD) and 249-349 (PILQ…AWLT). An intrachain disulfide couples cysteine 172 to cysteine 224. Residues asparagine 258, asparagine 290, asparagine 311, and asparagine 322 are each glycosylated (N-linked (GlcNAc...) asparagine). Cysteine 271 and cysteine 333 are disulfide-bonded. A helical transmembrane segment spans residues 370–390 (IILYASGSLALAVLLLLAGLY). Residue tyrosine 390 is modified to Phosphotyrosine; in variant R-388. Over 391–802 (RGQALHGRHP…SFPFGSGVQT (412 aa)) the chain is Cytoplasmic. Positions 467–755 (LVLGKPLGEG…VLLAVSEEYL (289 aa)) constitute a Protein kinase domain. ATP is bound by residues 473–481 (LGEGCFGQV) and lysine 503. At serine 573 the chain carries Phosphoserine. The active-site Proton acceptor is aspartate 612. Phosphotyrosine; by autocatalysis occurs at positions 642, 643, and 754.

Belongs to the protein kinase superfamily. Tyr protein kinase family. Fibroblast growth factor receptor subfamily. As to quaternary structure, monomer. Homodimer after ligand binding. Interacts with FGF1, FGF2, FGF4, FGF6, FGF8, FGF9, FGF16, FGF17, FGF18, FGF19, FGF21 and FGF23 (in vitro). Binding affinity for FGF family members is enhanced by interactions between FGFs and heparan sulfate proteoglycans. Interacts with KLB; this strongly increases the affinity for FGF19 and FGF23. Affinity for FGF19 is strongly increased by KLB and sulfated glycosaminoglycans. KLB and KL both interact with the core-glycosylated FGFR4 in the endoplasmic reticulum and promote its degradation, so that only FGFR4 with fully mature N-glycans is expressed at the cell surface. Identified in a complex with NCAM1, CDH2, PLCG1, FRS2, SRC, SHC1, GAP43 and CTTN. Interacts with MMP14 and HIP1. Interacts with STAT3. N-glycosylated. Full maturation of the glycan chains in the Golgi is essential for high affinity interaction with FGF19. Post-translationally, ubiquitinated. Subject to proteasomal degradation when not fully glycosylated. In terms of processing, autophosphorylated. Binding of FGF family members together with heparan sulfate proteoglycan or heparin promotes receptor dimerization and autophosphorylation on tyrosine residues. Autophosphorylation occurs in trans between the two FGFR molecules present in the dimer. As to expression, expressed in gastrointestinal epithelial cells, pancreas, and gastric and pancreatic cancer cell lines.

It localises to the cell membrane. It is found in the endosome. Its subcellular location is the endoplasmic reticulum. The protein resides in the secreted. It catalyses the reaction L-tyrosyl-[protein] + ATP = O-phospho-L-tyrosyl-[protein] + ADP + H(+). Present in an inactive conformation in the absence of bound ligand. Ligand binding leads to dimerization and activation by autophosphorylation on tyrosine residues. Functionally, tyrosine-protein kinase that acts as a cell-surface receptor for fibroblast growth factors and plays a role in the regulation of cell proliferation, differentiation and migration, and in regulation of lipid metabolism, bile acid biosynthesis, glucose uptake, vitamin D metabolism and phosphate homeostasis. Required for normal down-regulation of the expression of CYP7A1, the rate-limiting enzyme in bile acid synthesis, in response to FGF19. Phosphorylates PLCG1 and FRS2. Ligand binding leads to the activation of several signaling cascades. Activation of PLCG1 leads to the production of the cellular signaling molecules diacylglycerol and inositol 1,4,5-trisphosphate. Phosphorylation of FRS2 triggers recruitment of GRB2, GAB1, PIK3R1 and SOS1, and mediates activation of RAS, MAPK1/ERK2, MAPK3/ERK1 and the MAP kinase signaling pathway, as well as of the AKT1 signaling pathway. Promotes SRC-dependent phosphorylation of the matrix protease MMP14 and its lysosomal degradation. FGFR4 signaling is down-regulated by receptor internalization and degradation; MMP14 promotes internalization and degradation of FGFR4. Mutations that lead to constitutive kinase activation or impair normal FGFR4 inactivation lead to aberrant signaling. The chain is Fibroblast growth factor receptor 4 (FGFR4) from Homo sapiens (Human).